The primary structure comprises 109 residues: Aquaporin-2 (109 aa).

At 1–6 the chain is on the cytoplasmic side; sequence SIAFSR. A helical membrane pass occupies residues 7 to 27; the sequence is AVFSEFLATLLFVFFGLGSAL. Residues 28 to 35 lie on the Extracellular side of the membrane; it reads NWPQALPS. A helical membrane pass occupies residues 36–54; that stretch reads VLQIAMAFGLAIGTLVQAL. At 55–59 the chain is on the cytoplasmic side; that stretch reads GHISG. The discontinuously helical intramembrane region spans 60 to 69; sequence AHINPAVTVA. The short motif at 63–65 is the NPA 1 element; it reads NPA. Residues 70–80 are Cytoplasmic-facing; the sequence is CLVGCHVSFLR. A helical transmembrane segment spans residues 81–102; it reads ATFYLAAQLLGAVAGAAILHEI. Over 103-109 the chain is Extracellular; it reads TPPDIRG.

It belongs to the MIP/aquaporin (TC 1.A.8) family. Homotetramer. Post-translationally, serine phosphorylation is necessary and sufficient for expression at the apical membrane. Endocytosis is not phosphorylation-dependent. In terms of processing, N-glycosylated.

It localises to the apical cell membrane. The protein localises to the basolateral cell membrane. Its subcellular location is the cell membrane. It is found in the cytoplasmic vesicle membrane. The protein resides in the golgi apparatus. It localises to the trans-Golgi network membrane. The catalysed reaction is H2O(in) = H2O(out). The enzyme catalyses glycerol(in) = glycerol(out). Functionally, forms a water-specific channel that provides the plasma membranes of renal collecting duct with high permeability to water, thereby permitting water to move in the direction of an osmotic gradient. Plays an essential role in renal water homeostasis. Could also be permeable to glycerol. The polypeptide is Aquaporin-2 (Dugong dugon (Dugong)).